The primary structure comprises 268 residues: uncharacterized protein (268 aa).

3 helical membrane passes run 169-189, 190-210, and 225-245; these read AIIY…QGFA, GVKT…LWLL, and IFAG…LSVF.

The protein resides in the cell membrane. This is an uncharacterized protein from Bacillus subtilis (strain 168).